The following is a 98-amino-acid chain: Integration host factor subunit alpha (98 aa).

Positions 49–71 (FGNFDLRDKNQRPGRNPKTGEDI) are disordered.

It belongs to the bacterial histone-like protein family. As to quaternary structure, heterodimer of an alpha and a beta chain.

In terms of biological role, this protein is one of the two subunits of integration host factor, a specific DNA-binding protein that functions in genetic recombination as well as in transcriptional and translational control. The chain is Integration host factor subunit alpha from Shewanella halifaxensis (strain HAW-EB4).